Consider the following 453-residue polypeptide: Cholesterol 7-desaturase nvd (453 aa).

The helical transmembrane segment at 53-73 (IVEYILILTLMFAFSAILYVI) threads the bilayer. Residues 126-229 (WFAVAETREL…VVETDGAIWI (104 aa)) enclose the Rieske domain. Cys-167, His-169, Cys-187, and His-190 together coordinate [2Fe-2S] cluster.

The protein belongs to the cholesterol 7-desaturase family. [2Fe-2S] cluster serves as cofactor.

The protein resides in the membrane. It carries out the reaction cholesterol + NADPH + O2 + H(+) = 7-dehydrocholesterol + NADP(+) + 2 H2O. The catalysed reaction is cholesterol + NADH + O2 + H(+) = 7-dehydrocholesterol + NAD(+) + 2 H2O. It functions in the pathway steroid hormone biosynthesis; dafachronic acid biosynthesis. Its function is as follows. Catalyzes the production of 7-dehydrocholesterol (7-DHC or cholesta-5,7-dien-3beta-ol) by inserting a double bond (desaturating) at the C7-C8 single bond of cholesterol. Essential regulator of steroid biosynthesis as this reaction is the first step in the synthesis of the steroid hormone Delta(7)-dafachronic acid. The chain is Cholesterol 7-desaturase nvd from Bombyx mori (Silk moth).